A 182-amino-acid chain; its full sequence is Pyruvoyl-dependent arginine decarboxylase (182 aa).

A Pyruvic acid (Ser) modification is found at serine 44.

The protein belongs to the PdaD family. It depends on pyruvate as a cofactor.

It carries out the reaction L-arginine + H(+) = agmatine + CO2. The polypeptide is Pyruvoyl-dependent arginine decarboxylase (Picrophilus torridus (strain ATCC 700027 / DSM 9790 / JCM 10055 / NBRC 100828 / KAW 2/3)).